Here is a 389-residue protein sequence, read N- to C-terminus: P2X purinoceptor 4a (389 aa).

At 1-36 (MSESVGCCDSVSQCFFDYYTSKILIIRSKKVGTLNR) the chain is on the cytoplasmic side. The chain crosses the membrane as a helical span at residues 37 to 57 (FTQALVIAYVIGYVCVYNKGY). Residues 58-343 (QDTDTVLSSV…NIIPTLLNMG (286 aa)) are Extracellular-facing. The ATP site is built by Lys-70 and Lys-72. CTP-binding residues include Lys-70 and Lys-72. N-linked (GlcNAc...) asparagine glycans are attached at residues Asn-78 and Asn-113. Cystine bridges form between Cys-119–Cys-168, Cys-129–Cys-152, and Cys-135–Cys-162. Arg-143 contributes to the CTP binding site. Residue Asn-187 is glycosylated (N-linked (GlcNAc...) asparagine). ATP-binding residues include Thr-189 and Leu-191. Thr-189 contacts CTP. An N-linked (GlcNAc...) asparagine glycan is attached at Asn-213. 2 disulfide bridges follow: Cys-220/Cys-230 and Cys-264/Cys-273. 3 residues coordinate ATP: Asn-296, Arg-298, and Lys-316. Asn-296, Arg-298, and Lys-316 together coordinate CTP. The chain crosses the membrane as a helical span at residues 344-364 (AGLALLGLVNVICDWIVLTFM). The Cytoplasmic portion of the chain corresponds to 365-389 (KRKQHYKEQKYTYVDDFGLLHNEDK).

It belongs to the P2X receptor family. As to quaternary structure, functional P2XRs are organized as homomeric and heteromeric trimers. Forms homotrimer.

Its subcellular location is the cell membrane. The protein localises to the lysosome membrane. It catalyses the reaction K(+)(in) = K(+)(out). The enzyme catalyses Na(+)(in) = Na(+)(out). It carries out the reaction Ca(2+)(in) = Ca(2+)(out). Its activity is regulated as follows. Activated by ATP. pH-dependent and inhibited by acidic pH. Its function is as follows. ATP-gated nonselective transmembrane cation channel permeable to potassium, sodium and calcium. CTP, but not GTP or UTP, functions as a weak affinity agonist for P2RX4. Activated by extracellularly released ATP, it plays multiple role in immunity and central nervous system physiology. Could also function as an ATP-gated cation channel of lysosomal membranes. This is P2X purinoceptor 4a (p2rx4a) from Danio rerio (Zebrafish).